A 65-amino-acid polypeptide reads, in one-letter code: Peptide ToAcP (65 aa).

Residues 1-24 (MKMKMIVVISILLIVFSLSSKAMS) form the signal peptide. Positions 25 to 34 (LEDEQESVQR) are excised as a propeptide. Alanine amide is present on Ala-58. Residues 59-65 (GRFDPAV) constitute a propeptide that is removed on maturation.

In terms of tissue distribution, expressed by the venom gland.

Its subcellular location is the secreted. Helical wheel projections predict no hydrophobic face, suggesting a non-amphipathic peptide. Does not show antifungal activity. This Tityus obscurus (Amazonian scorpion) protein is Peptide ToAcP.